A 471-amino-acid polypeptide reads, in one-letter code: Trigger factor (471 aa).

A PPIase FKBP-type domain is found at 166 to 245 (DDFITIDINA…LTAVKVRELP (80 aa)). Residues 442 to 471 (AAGVTGEDDDTEAEEERVTVSADDPGAARF) are disordered. A compositionally biased stretch (acidic residues) spans 447–456 (GEDDDTEAEE).

Belongs to the FKBP-type PPIase family. Tig subfamily.

The protein resides in the cytoplasm. It catalyses the reaction [protein]-peptidylproline (omega=180) = [protein]-peptidylproline (omega=0). Involved in protein export. Acts as a chaperone by maintaining the newly synthesized protein in an open conformation. Functions as a peptidyl-prolyl cis-trans isomerase. The chain is Trigger factor from Renibacterium salmoninarum (strain ATCC 33209 / DSM 20767 / JCM 11484 / NBRC 15589 / NCIMB 2235).